Consider the following 566-residue polypeptide: Developmental regulatory protein wetA (566 aa).

Disordered stretches follow at residues 116-174, 232-316, 334-364, 381-400, and 429-542; these read VPAV…LMRP, STEG…SDSL, AWWP…SIQS, SSFD…VTSA, and PPVQ…RRRK. 2 stretches are compositionally biased toward polar residues: residues 165 to 174 and 269 to 291; these read QSFSPSLMRP and AQQQ…SSPP. A compositionally biased stretch (low complexity) spans 298 to 316; that stretch reads SSPHSSDPQSLSSWHSDSL. 2 stretches are compositionally biased toward polar residues: residues 347–364 and 381–398; these read PSYQ…SIQS and SSFD…SVVT. A compositionally biased stretch (low complexity) spans 435–448; it reads SRSPSLSPRGRGSP. Residues 449 to 462 show a composition bias toward polar residues; that stretch reads TQGSPLRNEASTKT. Residues 463-473 are compositionally biased toward basic residues; that stretch reads SPHRRGYHGRK. Positions 482–500 are enriched in low complexity; that stretch reads PKPVKGPNSSSPGSGSNKS. A compositionally biased stretch (polar residues) spans 501-511; it reads LTVSFVNFTPN.

This sequence belongs to the wetA family.

Functionally, brlA, abaA and wetA are pivotal regulators of conidiophore development and conidium maturation. They act individually and together to regulate their own expression and that of numerous other sporulation-specific genes. Plays an essential role in the completion of conidial maturation and is essential for trehalose biogenesis in conidia. Negatively regulates expression of the melanin biosynthetic gene cluster. Also plays an a role in the early phase of fungal growth including proper hyphal branching. The sequence is that of Developmental regulatory protein wetA from Aspergillus fumigatus (strain ATCC MYA-4609 / CBS 101355 / FGSC A1100 / Af293) (Neosartorya fumigata).